The sequence spans 168 residues: uncharacterized protein (168 aa).

It is found in the mitochondrion. This is an uncharacterized protein from Marchantia polymorpha (Common liverwort).